The sequence spans 188 residues: Inosine triphosphate pyrophosphatase (188 aa).

Residue 12 to 17 coordinates ITP; that stretch reads TGNANK. E40 serves as a coordination point for Mg(2+). ITP is bound by residues K52, 68–69, K85, 144–147, K165, and 170–171; these read DT, FGWD, and HR.

Belongs to the HAM1 NTPase family. As to quaternary structure, homodimer. It depends on Mg(2+) as a cofactor. Requires Mn(2+) as cofactor.

Its subcellular location is the cytoplasm. The protein resides in the nucleus. It carries out the reaction ITP + H2O = IMP + diphosphate + H(+). The enzyme catalyses dITP + H2O = dIMP + diphosphate + H(+). It catalyses the reaction XTP + H2O = XMP + diphosphate + H(+). Its function is as follows. Pyrophosphatase that hydrolyzes non-canonical purine nucleotides such as inosine triphosphate (ITP), deoxyinosine triphosphate (dITP) or xanthosine 5'-triphosphate (XTP) to their respective monophosphate derivatives. The enzyme does not distinguish between the deoxy- and ribose forms. Probably excludes non-canonical purines from RNA and DNA precursor pools, thus preventing their incorporation into RNA and DNA and avoiding chromosomal lesions. This chain is Inosine triphosphate pyrophosphatase, found in Podospora anserina (strain S / ATCC MYA-4624 / DSM 980 / FGSC 10383) (Pleurage anserina).